The following is a 396-amino-acid chain: S-adenosylmethionine decarboxylase proenzyme (396 aa).

Catalysis depends on residues Glu29 and Glu32. Residue Ser88 is the Schiff-base intermediate with substrate; via pyruvic acid of the active site. Ser88 is subject to Pyruvic acid (Ser); by autocatalysis. Cys102 acts as the Proton donor; for catalytic activity in catalysis. Catalysis depends on proton acceptor; for processing activity residues Ser287 and His301.

This sequence belongs to the eukaryotic AdoMetDC family. Pyruvate serves as cofactor. Post-translationally, is synthesized initially as an inactive proenzyme. Formation of the active enzyme involves a self-maturation process in which the active site pyruvoyl group is generated from an internal serine residue via an autocatalytic post-translational modification. Two non-identical subunits are generated from the proenzyme in this reaction, and the pyruvate is formed at the N-terminus of the alpha chain, which is derived from the carboxyl end of the proenzyme. The post-translation cleavage follows an unusual pathway, termed non-hydrolytic serinolysis, in which the side chain hydroxyl group of the serine supplies its oxygen atom to form the C-terminus of the beta chain, while the remainder of the serine residue undergoes an oxidative deamination to produce ammonia and the pyruvoyl group blocking the N-terminus of the alpha chain.

The catalysed reaction is S-adenosyl-L-methionine + H(+) = S-adenosyl 3-(methylsulfanyl)propylamine + CO2. Its pathway is amine and polyamine biosynthesis; S-adenosylmethioninamine biosynthesis; S-adenosylmethioninamine from S-adenosyl-L-methionine: step 1/1. Catalyzes the decarboxylation of S-adenosylmethionine, a key step in the biosynthetic pathway for spermidine and spermine. It is essential for normal growth, sporulation, and maintenance of ds-RNA virus. In Saccharomyces cerevisiae (strain ATCC 204508 / S288c) (Baker's yeast), this protein is S-adenosylmethionine decarboxylase proenzyme (SPE2).